The chain runs to 380 residues: Phosphate acyltransferase (380 aa).

A disordered region spans residues Met1–Gly23.

Belongs to the PlsX family. In terms of assembly, homodimer. Probably interacts with PlsY.

The protein localises to the cytoplasm. The enzyme catalyses a fatty acyl-[ACP] + phosphate = an acyl phosphate + holo-[ACP]. Its pathway is lipid metabolism; phospholipid metabolism. Catalyzes the reversible formation of acyl-phosphate (acyl-PO(4)) from acyl-[acyl-carrier-protein] (acyl-ACP). This enzyme utilizes acyl-ACP as fatty acyl donor, but not acyl-CoA. The polypeptide is Phosphate acyltransferase (Acidiphilium cryptum (strain JF-5)).